The chain runs to 296 residues: tRNA dimethylallyltransferase (296 aa).

Residue 19-26 (GPTASGKS) coordinates ATP. 21 to 26 (TASGKS) is a binding site for substrate.

This sequence belongs to the IPP transferase family. In terms of assembly, monomer. The cofactor is Mg(2+).

The enzyme catalyses adenosine(37) in tRNA + dimethylallyl diphosphate = N(6)-dimethylallyladenosine(37) in tRNA + diphosphate. In terms of biological role, catalyzes the transfer of a dimethylallyl group onto the adenine at position 37 in tRNAs that read codons beginning with uridine, leading to the formation of N6-(dimethylallyl)adenosine (i(6)A). The chain is tRNA dimethylallyltransferase from Dinoroseobacter shibae (strain DSM 16493 / NCIMB 14021 / DFL 12).